The chain runs to 664 residues: Acetolactate synthase 2, chloroplastic (664 aa).

The segment covering 1 to 34 (MAAAAAAPSPSFSKTLSSSSSKSSTLLPRSTFPF) has biased composition (low complexity). The disordered stretch occupies residues 1–51 (MAAAAAAPSPSFSKTLSSSSSKSSTLLPRSTFPFPHHPHKTTPPPLHLTPT). The transit peptide at 1 to 91 (MAAAAAAPSP…VSRFAPDEPR (91 aa)) directs the protein to the chloroplast. E138 contacts thiamine diphosphate. An intrachain disulfide couples C158 to C304. Residues R240, 346-367 (HGTV…FGVR), and 389-408 (DIDS…ICAD) each bind FAD. A thiamine pyrophosphate binding region spans residues 481-561 (QHQMWAAQYY…VKIMLLNNQH (81 aa)). The Mg(2+) site is built by D532 and N559.

It belongs to the TPP enzyme family. The cofactor is Mg(2+). Requires thiamine diphosphate as cofactor.

It is found in the plastid. The protein localises to the chloroplast. The catalysed reaction is 2 pyruvate + H(+) = (2S)-2-acetolactate + CO2. It participates in amino-acid biosynthesis; L-isoleucine biosynthesis; L-isoleucine from 2-oxobutanoate: step 1/4. The protein operates within amino-acid biosynthesis; L-valine biosynthesis; L-valine from pyruvate: step 1/4. This Nicotiana tabacum (Common tobacco) protein is Acetolactate synthase 2, chloroplastic (ALS SURB).